The sequence spans 403 residues: Methylthioribose-1-phosphate isomerase (403 aa).

The Proton donor role is filled by Asp-277.

The protein belongs to the eIF-2B alpha/beta/delta subunits family. MtnA subfamily.

Its subcellular location is the cytoplasm. The protein localises to the nucleus. The catalysed reaction is 5-(methylsulfanyl)-alpha-D-ribose 1-phosphate = 5-(methylsulfanyl)-D-ribulose 1-phosphate. The protein operates within amino-acid biosynthesis; L-methionine biosynthesis via salvage pathway; L-methionine from S-methyl-5-thio-alpha-D-ribose 1-phosphate: step 1/6. In terms of biological role, catalyzes the interconversion of methylthioribose-1-phosphate (MTR-1-P) into methylthioribulose-1-phosphate (MTRu-1-P). The sequence is that of Methylthioribose-1-phosphate isomerase from Lodderomyces elongisporus (strain ATCC 11503 / CBS 2605 / JCM 1781 / NBRC 1676 / NRRL YB-4239) (Yeast).